A 334-amino-acid polypeptide reads, in one-letter code: GTP 3',8-cyclase (334 aa).

Residues 13–239 (RFHRKFYYLR…KVKAVNDGPA (227 aa)) enclose the Radical SAM core domain. Position 22 (Arg-22) interacts with GTP. [4Fe-4S] cluster contacts are provided by Cys-29 and Cys-33. Tyr-35 serves as a coordination point for S-adenosyl-L-methionine. Position 36 (Cys-36) interacts with [4Fe-4S] cluster. Residue Arg-73 participates in GTP binding. Gly-77 provides a ligand contact to S-adenosyl-L-methionine. Residue Thr-104 coordinates GTP. Ser-128 lines the S-adenosyl-L-methionine pocket. Lys-165 contacts GTP. Position 199 (Met-199) interacts with S-adenosyl-L-methionine. 2 residues coordinate [4Fe-4S] cluster: Cys-262 and Cys-265. 267-269 (RLR) contacts GTP. A [4Fe-4S] cluster-binding site is contributed by Cys-279.

Belongs to the radical SAM superfamily. MoaA family. In terms of assembly, monomer and homodimer. The cofactor is [4Fe-4S] cluster.

It catalyses the reaction GTP + AH2 + S-adenosyl-L-methionine = (8S)-3',8-cyclo-7,8-dihydroguanosine 5'-triphosphate + 5'-deoxyadenosine + L-methionine + A + H(+). Its pathway is cofactor biosynthesis; molybdopterin biosynthesis. Its function is as follows. Catalyzes the cyclization of GTP to (8S)-3',8-cyclo-7,8-dihydroguanosine 5'-triphosphate. The polypeptide is GTP 3',8-cyclase (Vibrio atlanticus (strain LGP32) (Vibrio splendidus (strain Mel32))).